A 122-amino-acid chain; its full sequence is Fluoride-specific ion channel FluC (122 aa).

The next 4 helical transmembrane spans lie at 5–25 (FLIG…SGII), 29–49 (FGIP…VGFL), 65–85 (FIIT…YESF), and 93–113 (FIKS…MIYF). Residues G72 and T75 each contribute to the Na(+) site.

The protein belongs to the fluoride channel Fluc/FEX (TC 1.A.43) family.

Its subcellular location is the cell membrane. It carries out the reaction fluoride(in) = fluoride(out). With respect to regulation, na(+) is not transported, but it plays an essential structural role and its presence is essential for fluoride channel function. In terms of biological role, fluoride-specific ion channel. Important for reducing fluoride concentration in the cell, thus reducing its toxicity. This Methanococcus vannielii (strain ATCC 35089 / DSM 1224 / JCM 13029 / OCM 148 / SB) protein is Fluoride-specific ion channel FluC.